Reading from the N-terminus, the 800-residue chain is Putative antiporter subunit mnhA2 (800 aa).

20 helical membrane passes run 1–21, 33–53, 78–98, 118–138, 167–187, 207–227, 241–261, 273–293, 300–320, 331–351, 387–407, 424–444, 472–492, 527–547, 595–615, 627–647, 651–671, 676–696, 712–732, and 768–788; these read MSLV…LLMS, IALV…PSVA, GLSL…FFYA, LFMF…MYIF, FMIT…LYIM, GLFI…SAQF, TPVS…FLLL, YIYI…ITAL, GILA…VGIG, IASI…NHAI, LVMT…GFLS, FSLI…IFTF, PWLF…IFFV, GFNI…VLAI, IIMT…RIGL, GALE…LIFI, LTMV…FIAM, LALT…VSFS, IIKI…IFIT, and LDTL…YTLL.

This sequence belongs to the CPA3 antiporters (TC 2.A.63) subunit A family. In terms of assembly, may form a heterooligomeric complex that consists of seven subunits: mnhA2, mnhB2, mnhC2, mnhD2, mnhE2, mnhF2 and mnhG2.

The protein resides in the cell membrane. The chain is Putative antiporter subunit mnhA2 (mnhA2) from Staphylococcus aureus (strain Mu3 / ATCC 700698).